Here is a 1634-residue protein sequence, read N- to C-terminus: Protein TIC 214 (1634 aa).

5 helical membrane-spanning segments follow: residues 25 to 45, 53 to 73, 94 to 116, 133 to 153, and 172 to 192; these read FIIGQFIRFISIYYAPLYVAL, ILALPYLLIHLFWNTDKSFFA, HFILQLLNSCILPNSTLARLITI, FAWFIGQIFMLNSFELVLVWI, and IFVILFNCLFGSLLFILSIQC. Disordered stretches follow at residues 216 to 242 and 1365 to 1395; these read RERLQSEEERDVEKKKPDYKLPDSESE and QQKSETDSETDSQQKNIAETQKYLEEDSTKS. Residues 1386-1395 are compositionally biased toward basic and acidic residues; sequence KYLEEDSTKS.

It belongs to the TIC214 family. Part of the Tic complex.

It localises to the plastid. The protein resides in the chloroplast inner membrane. In terms of biological role, involved in protein precursor import into chloroplasts. May be part of an intermediate translocation complex acting as a protein-conducting channel at the inner envelope. In Cuscuta exaltata (Tall dodder), this protein is Protein TIC 214.